Consider the following 274-residue polypeptide: Diaminopimelate epimerase (274 aa).

Residues N11, Q44, and N64 each contribute to the substrate site. C73 (proton donor) is an active-site residue. Substrate is bound by residues 74 to 75 (GN), N157, N190, and 208 to 209 (ER). Residue C217 is the Proton acceptor of the active site. 218–219 (GS) lines the substrate pocket.

The protein belongs to the diaminopimelate epimerase family. In terms of assembly, homodimer.

The protein localises to the cytoplasm. It catalyses the reaction (2S,6S)-2,6-diaminopimelate = meso-2,6-diaminopimelate. It participates in amino-acid biosynthesis; L-lysine biosynthesis via DAP pathway; DL-2,6-diaminopimelate from LL-2,6-diaminopimelate: step 1/1. Its function is as follows. Catalyzes the stereoinversion of LL-2,6-diaminopimelate (L,L-DAP) to meso-diaminopimelate (meso-DAP), a precursor of L-lysine and an essential component of the bacterial peptidoglycan. In Cronobacter sakazakii (strain ATCC BAA-894) (Enterobacter sakazakii), this protein is Diaminopimelate epimerase.